The following is a 174-amino-acid chain: Protein RESISTANCE TO POWDERY MILDEW 8.2 (174 aa).

Residues 1-153 (MIAEVAAGGA…IMPQPKFEIH (153 aa)) form the RPW8 domain. A helical membrane pass occupies residues 7-23 (AGGALGLALSVLHEAVK). The stretch at 68-145 (VNKRLKLLLE…EISTKLDKIM (78 aa)) forms a coiled coil.

It belongs to the plant RPW8 protein family.

It is found in the membrane. Its function is as follows. Disease resistance (R) protein that induces localized, salicylic acid-dependent defenses. Confers resistance to powdery mildew (e.g. Erysiphe cichoracearum UCSC1). The chain is Protein RESISTANCE TO POWDERY MILDEW 8.2 from Arabidopsis thaliana (Mouse-ear cress).